Here is a 172-residue protein sequence, read N- to C-terminus: Adenine phosphoribosyltransferase (172 aa).

It belongs to the purine/pyrimidine phosphoribosyltransferase family. Homodimer.

The protein localises to the cytoplasm. The catalysed reaction is AMP + diphosphate = 5-phospho-alpha-D-ribose 1-diphosphate + adenine. Its pathway is purine metabolism; AMP biosynthesis via salvage pathway; AMP from adenine: step 1/1. Its function is as follows. Catalyzes a salvage reaction resulting in the formation of AMP, that is energically less costly than de novo synthesis. The protein is Adenine phosphoribosyltransferase of Gloeothece citriformis (strain PCC 7424) (Cyanothece sp. (strain PCC 7424)).